Reading from the N-terminus, the 318-residue chain is Elongation factor Ts, mitochondrial (318 aa).

The transit peptide at 1–18 (MLLQRFFTRALHSTRQLY) directs the protein to the mitochondrion.

Belongs to the EF-Ts family.

The protein resides in the mitochondrion. Its function is as follows. Associates with the EF-Tu.GDP complex and induces the exchange of GDP to GTP. It remains bound to the aminoacyl-tRNA.EF-Tu.GTP complex up to the GTP hydrolysis stage on the ribosome. The chain is Elongation factor Ts, mitochondrial from Drosophila melanogaster (Fruit fly).